Reading from the N-terminus, the 548-residue chain is Tylosin resistance ATP-binding protein TlrC (548 aa).

2 ABC transporter domains span residues 9-265 (LSLH…RRRQ) and 347-547 (IATA…VSGA). ATP-binding positions include 41–48 (GDNGAGKS) and 387–394 (GPNGAGKS).

The protein belongs to the ABC transporter superfamily.

It localises to the cell membrane. Its function is as follows. Responsible for tylosin resistance, and is proposed to be a subunit of a multicomponent export system for the energy-dependent efflux of tylosin. This is Tylosin resistance ATP-binding protein TlrC (tlrC) from Streptomyces fradiae (Streptomyces roseoflavus).